Reading from the N-terminus, the 294-residue chain is MIDPMFRGVLPALVTPYRNGQVDEDAFVALVERQIAGGVHGLVPVGTTGESATLTHEEHRRVVELCVKTARGRVPVVAGAGSNSTAEAIELVRHAKTVGADAALVVTPYYNRPSQEGLYAHYRAINDAVQLPILVYNVPTRTSVDISNDVLVRLSKLPNVVGIKDATSDLVRASFQRLHCGEEWVMLSGDDPVALGYMAHGGHGCISVTANVAPEQCADFYNAALSGDWATALQWQDRLVRLHKALFADASPAPTKFALSHLGLCSEETRLPITPASEAARAEVLAAMRDAGLI.

A pyruvate-binding site is contributed by threonine 48. Tyrosine 136 serves as the catalytic Proton donor/acceptor. The active-site Schiff-base intermediate with substrate is lysine 164. Pyruvate is bound at residue isoleucine 206.

The protein belongs to the DapA family. As to quaternary structure, homotetramer; dimer of dimers.

It is found in the cytoplasm. It catalyses the reaction L-aspartate 4-semialdehyde + pyruvate = (2S,4S)-4-hydroxy-2,3,4,5-tetrahydrodipicolinate + H2O + H(+). Its pathway is amino-acid biosynthesis; L-lysine biosynthesis via DAP pathway; (S)-tetrahydrodipicolinate from L-aspartate: step 3/4. Its function is as follows. Catalyzes the condensation of (S)-aspartate-beta-semialdehyde [(S)-ASA] and pyruvate to 4-hydroxy-tetrahydrodipicolinate (HTPA). This Phenylobacterium zucineum (strain HLK1) protein is 4-hydroxy-tetrahydrodipicolinate synthase.